Reading from the N-terminus, the 338-residue chain is Structural protein VP9 (338 aa).

It localises to the virion. Its function is as follows. Plays an important role in virus transmission by the insect vector. May participate in the virus stability by binding clamp proteins and surrounding the pentameric turrets present in the virion. This Rice ragged stunt virus (isolate Thailand) (RRSV) protein is Structural protein VP9.